The chain runs to 215 residues: 24 kDa Ras-like protein (215 aa).

17-24 is a binding site for GTP; that stretch reads GGGGVGKS. The Effector region motif lies at 39–47; the sequence is YDPTIEDSY. Residues 64-68 and 123-126 each bind GTP; these read DTAGQ and NKCD. The segment at 179–199 is disordered; sequence QTGRPAIAAGGGGPAGSYTQD. At cysteine 212 the chain carries Cysteine methyl ester. The S-farnesyl cysteine moiety is linked to residue cysteine 212. Positions 213-215 are cleaved as a propeptide — removed in mature form; it reads VIA.

Belongs to the small GTPase superfamily. Ras family.

The protein localises to the cell membrane. It carries out the reaction GTP + H2O = GDP + phosphate + H(+). In terms of biological role, ras proteins bind GDP/GTP and possess intrinsic GTPase activity. The chain is 24 kDa Ras-like protein (CC-RAS) from Coprinopsis cinerea (strain Okayama-7 / 130 / ATCC MYA-4618 / FGSC 9003) (Inky cap fungus).